The chain runs to 260 residues: Snake venom serine protease homolog (260 aa).

Positions 1-18 (MVLVRVLANLLMLQLSYA) are cleaved as a signal peptide. A propeptide spanning residues 19-24 (QKSSEL) is cleaved from the precursor. Residues 25-251 (IIGGDECNIN…HLNWIQSIIA (227 aa)) form the Peptidase S1 domain. 6 cysteine pairs are disulfide-bonded: cysteine 31/cysteine 165, cysteine 52/cysteine 68, cysteine 100/cysteine 258, cysteine 144/cysteine 212, cysteine 176/cysteine 191, and cysteine 202/cysteine 227. N-linked (GlcNAc...) asparagine glycans are attached at residues asparagine 123 and asparagine 124. A glycan (N-linked (GlcNAc...) asparagine) is linked at asparagine 253.

It belongs to the peptidase S1 family. Snake venom subfamily. In terms of tissue distribution, expressed by the venom gland.

Its subcellular location is the secreted. In terms of biological role, snake venom serine protease homolog that may act in the hemostasis system of the prey. The sequence is that of Snake venom serine protease homolog from Protobothrops jerdonii (Jerdon's pitviper).